Reading from the N-terminus, the 163-residue chain is Protein YtsP (163 aa).

Belongs to the free Met sulfoxide reductase family.

This chain is Protein YtsP (ytsP), found in Bacillus subtilis (strain 168).